The following is a 317-amino-acid chain: (R)-citramalyl-CoA lyase (317 aa).

A Pyruvate carboxyltransferase domain is found at 4 to 281; sequence VTIVDVAPRD…PTGIDLSALI (278 aa). Residue arginine 12 coordinates substrate. 3 residues coordinate a divalent metal cation: aspartate 13, histidine 214, and histidine 216. Cysteine 247 is a catalytic residue. Position 256 (asparagine 256) interacts with a divalent metal cation.

Belongs to the HMG-CoA lyase family. Homodimer. Mn(2+) is required as a cofactor. Co(2+) serves as cofactor. The cofactor is Ni(2+). It depends on Mg(2+) as a cofactor.

The enzyme catalyses (3R)-citramalyl-CoA = pyruvate + acetyl-CoA. Activated by dithioerythritol (DTE) (in vitro). In terms of biological role, involved in the glyoxylate assimilation cycle used to regenerate acetyl-CoA and produce pyruvate as universal precursor for biosynthesis. Catalyzes the cleavage of (R)-citramalyl-CoA to yield acetyl-CoA and pyruvate. This Chloroflexus aurantiacus (strain ATCC 29366 / DSM 635 / J-10-fl) protein is (R)-citramalyl-CoA lyase (ccl).